The primary structure comprises 206 residues: Probable GTP-binding protein EngB (206 aa).

Residues 23–202 form the EngB-type G domain; sequence HTAEVAFVGR…WGALLDTFGK (180 aa). GTP-binding positions include 31–38, 58–62, 83–86, 150–153, and 181–183; these read GRSNVGKS, GRTRT, DLPG, TKVD, and FSS. Residues Ser-38 and Thr-60 each coordinate Mg(2+).

The protein belongs to the TRAFAC class TrmE-Era-EngA-EngB-Septin-like GTPase superfamily. EngB GTPase family. Mg(2+) serves as cofactor.

Functionally, necessary for normal cell division and for the maintenance of normal septation. The polypeptide is Probable GTP-binding protein EngB (Myxococcus xanthus (strain DK1622)).